We begin with the raw amino-acid sequence, 83 residues long: U15-theraphotoxin-Cg1a (83 aa).

An N-terminal signal peptide occupies residues 1–21 (MKAAILLAFAGLALLSVICHA). A propeptide spanning residues 22–49 (SENVEQDSFEEVFSAIFAMEDDLKPKER) is cleaved from the precursor. 3 cysteine pairs are disulfide-bonded: C51–C66, C58–C71, and C65–C77. At A81 the chain carries Alanine amide.

It belongs to the neurotoxin 10 (Hwtx-1) family. 66 (Jztx-24) subfamily. As to expression, expressed by the venom gland.

The protein localises to the secreted. In terms of biological role, probable ion channel inhibitor. This Chilobrachys guangxiensis (Chinese earth tiger tarantula) protein is U15-theraphotoxin-Cg1a.